Here is a 677-residue protein sequence, read N- to C-terminus: Methionine--tRNA ligase (677 aa).

A 'HIGH' region motif is present at residues Pro15–His25. The Zn(2+) site is built by Cys146, Cys149, Cys159, and Cys162. Positions Lys333–Ser337 match the 'KMSKS' region motif. Lys336 contacts ATP. Residues Asp575–Lys677 enclose the tRNA-binding domain.

This sequence belongs to the class-I aminoacyl-tRNA synthetase family. MetG type 1 subfamily. As to quaternary structure, homodimer. It depends on Zn(2+) as a cofactor.

It is found in the cytoplasm. It catalyses the reaction tRNA(Met) + L-methionine + ATP = L-methionyl-tRNA(Met) + AMP + diphosphate. Is required not only for elongation of protein synthesis but also for the initiation of all mRNA translation through initiator tRNA(fMet) aminoacylation. In Salmonella typhimurium (strain LT2 / SGSC1412 / ATCC 700720), this protein is Methionine--tRNA ligase.